Reading from the N-terminus, the 276-residue chain is MIKIGSHVRFRKPDYLFGAIQESLENKANTAMIFLGPPQSTFRVKPENYKLQDYQKHFFKQIPPEDIIVHAPYIINPASPIKAQFSNDFLVKEIEKINYIGAKFLVLHPGFFTSFTKEVAKKQLISSLKSILEKTKNVILLLETMSGKGSEMCANFEEIVEIVEAVESPRIGICLDTCHVWDAGYDLKNFPEFCKEIRRTRLINYLKVIHLNDSLSPLGSKKDRHANIGKGFIGLESLRKIIFDPLFANIPKILETPYVDNKPIYDQEIALLLKKV.

Positions 70, 108, 143, 176, 179, 210, 223, 225, and 255 each coordinate Zn(2+).

The protein belongs to the AP endonuclease 2 family. Requires Zn(2+) as cofactor.

The enzyme catalyses Endonucleolytic cleavage to 5'-phosphooligonucleotide end-products.. In terms of biological role, endonuclease IV plays a role in DNA repair. It cleaves phosphodiester bonds at apurinic or apyrimidinic (AP) sites, generating a 3'-hydroxyl group and a 5'-terminal sugar phosphate. In Mesomycoplasma hyopneumoniae (strain J / ATCC 25934 / NCTC 10110) (Mycoplasma hyopneumoniae), this protein is Probable endonuclease 4.